The following is a 391-amino-acid chain: Acetate kinase (391 aa).

Asn-4 lines the Mg(2+) pocket. Lys-11 contributes to the ATP binding site. Arg-85 is a substrate binding site. The active-site Proton donor/acceptor is the Asp-142. ATP contacts are provided by residues 202 to 206 (HLGNG), 277 to 279 (DLR), and 325 to 329 (GIGEN). Glu-378 contacts Mg(2+).

This sequence belongs to the acetokinase family. As to quaternary structure, homodimer. Mg(2+) serves as cofactor. It depends on Mn(2+) as a cofactor.

It localises to the cytoplasm. The catalysed reaction is acetate + ATP = acetyl phosphate + ADP. It functions in the pathway metabolic intermediate biosynthesis; acetyl-CoA biosynthesis; acetyl-CoA from acetate: step 1/2. Catalyzes the formation of acetyl phosphate from acetate and ATP. Can also catalyze the reverse reaction. The sequence is that of Acetate kinase from Halalkalibacterium halodurans (strain ATCC BAA-125 / DSM 18197 / FERM 7344 / JCM 9153 / C-125) (Bacillus halodurans).